Reading from the N-terminus, the 314-residue chain is BTB/POZ domain-containing protein KCTD17 (314 aa).

Positions 24 to 94 constitute a BTB domain; that stretch reads KWVRLNVGGT…LRHGKLVLDK (71 aa). A disordered region spans residues 190–268; that stretch reads STPNGLSSES…PAGGSRPHPL (79 aa). Residues 196–239 are a coiled coil; it reads SSESSRKTKSTEEQLEEQQQQEEEVEEVEVEQVQVEADAQEKAQ. Positions 208-225 are enriched in acidic residues; sequence EQLEEQQQQEEEVEEVEV.

In terms of assembly, homopentamer; forms a closed pentamer. Interacts with CUL3; interaction is direct and forms a 5:5 heterodecamer. Interacts with TCHP. Interacts with CUL3, as part of the BCR(KCTD17) E3 ubiquitin ligase complex, at least composed of CUL3, KCTD17 and RBX1. In terms of tissue distribution, highly expressed in brain. Highest expression is observed in the putamen and the thalamus.

The protein localises to the cytoplasm. Substrate-adapter for CUL3-RING ubiquitin ligase complexes which mediates the ubiquitination and subsequent proteasomal degradation of TCHP, a protein involved in ciliogenesis down-regulation. Thereby, positively regulates ciliogenesis, playing a crucial role in the initial steps of axoneme extension. May also play a role in endoplasmic reticulum calcium ion homeostasis. The chain is BTB/POZ domain-containing protein KCTD17 from Homo sapiens (Human).